The chain runs to 133 residues: Ribosome-binding factor A (133 aa).

The protein belongs to the RbfA family. As to quaternary structure, monomer. Binds 30S ribosomal subunits, but not 50S ribosomal subunits or 70S ribosomes.

The protein localises to the cytoplasm. Its function is as follows. One of several proteins that assist in the late maturation steps of the functional core of the 30S ribosomal subunit. Associates with free 30S ribosomal subunits (but not with 30S subunits that are part of 70S ribosomes or polysomes). Required for efficient processing of 16S rRNA. May interact with the 5'-terminal helix region of 16S rRNA. The polypeptide is Ribosome-binding factor A (Trichormus variabilis (strain ATCC 29413 / PCC 7937) (Anabaena variabilis)).